We begin with the raw amino-acid sequence, 753 residues long: 5-methyltetrahydropteroyltriglutamate--homocysteine methyltransferase (753 aa).

5-methyltetrahydropteroyltri-L-glutamate contacts are provided by residues 17-20 (RELK) and Lys117. L-homocysteine-binding positions include 431 to 433 (IGS) and Glu484. Residues 431–433 (IGS) and Glu484 contribute to the L-methionine site. 5-methyltetrahydropteroyltri-L-glutamate contacts are provided by residues 515-516 (RC) and Trp561. Asp599 provides a ligand contact to L-homocysteine. Asp599 provides a ligand contact to L-methionine. Residue Glu605 participates in 5-methyltetrahydropteroyltri-L-glutamate binding. Residues His641, Cys643, and Glu665 each coordinate Zn(2+). Catalysis depends on His694, which acts as the Proton donor. Cys726 provides a ligand contact to Zn(2+).

This sequence belongs to the vitamin-B12 independent methionine synthase family. The cofactor is Zn(2+).

The catalysed reaction is 5-methyltetrahydropteroyltri-L-glutamate + L-homocysteine = tetrahydropteroyltri-L-glutamate + L-methionine. The protein operates within amino-acid biosynthesis; L-methionine biosynthesis via de novo pathway; L-methionine from L-homocysteine (MetE route): step 1/1. Catalyzes the transfer of a methyl group from 5-methyltetrahydrofolate to homocysteine resulting in methionine formation. This chain is 5-methyltetrahydropteroyltriglutamate--homocysteine methyltransferase, found in Shigella sonnei (strain Ss046).